Reading from the N-terminus, the 275-residue chain is 2,3,4,5-tetrahydropyridine-2,6-dicarboxylate N-succinyltransferase (275 aa).

The protein belongs to the transferase hexapeptide repeat family.

It localises to the cytoplasm. It catalyses the reaction (S)-2,3,4,5-tetrahydrodipicolinate + succinyl-CoA + H2O = (S)-2-succinylamino-6-oxoheptanedioate + CoA. It functions in the pathway amino-acid biosynthesis; L-lysine biosynthesis via DAP pathway; LL-2,6-diaminopimelate from (S)-tetrahydrodipicolinate (succinylase route): step 1/3. This is 2,3,4,5-tetrahydropyridine-2,6-dicarboxylate N-succinyltransferase from Cupriavidus taiwanensis (strain DSM 17343 / BCRC 17206 / CCUG 44338 / CIP 107171 / LMG 19424 / R1) (Ralstonia taiwanensis (strain LMG 19424)).